Reading from the N-terminus, the 750-residue chain is GTP pyrophosphokinase rsh (750 aa).

One can recognise an HD domain in the interval 45–144 (YFSHPLEVAA…VKLADRLHNM (100 aa)). The 62-residue stretch at 390-451 (DQVFCFTPKG…KNGDEVDIIR (62 aa)) folds into the TGS domain. The interval 587–613 (AAKVDPAATTPKPGKRALPIRGTNPDL) is disordered. Positions 676-750 (RISVSAINSP…SVSSAKRVNG (75 aa)) constitute an ACT domain.

This sequence belongs to the RelA/SpoT family.

It carries out the reaction GTP + ATP = guanosine 3'-diphosphate 5'-triphosphate + AMP. In terms of biological role, functions as a (p)ppGpp synthase. In eubacteria ppGpp (guanosine 3'-diphosphate 5'-diphosphate) is a mediator of the stringent response that coordinates a variety of cellular activities in response to changes in nutritional abundance. Plays a role in adaptation of Brucella to its intracellular host environment. This Brucella abortus (strain 2308) protein is GTP pyrophosphokinase rsh (rsh).